A 538-amino-acid polypeptide reads, in one-letter code: Carboxypeptidase 2 (538 aa).

The N-terminal stretch at 1–21 is a signal peptide; it reads MVAYRFLTLISLGLGSHCASA. N-linked (GlcNAc...) asparagine glycosylation is present at Asn46. A disordered region spans residues 53–76; sequence PAFTSPGTVPRGFSDGTSGPTRDE. The 281-residue stretch at 71 to 351 folds into the Peptidase M14 domain; it reads GPTRDETMEG…VMVKSILQTA (281 aa). Zn(2+) contacts are provided by His136, Glu139, and His224. Glu322 functions as the Proton donor/acceptor in the catalytic mechanism. Residues Asn393 and Asn459 are each glycosylated (N-linked (GlcNAc...) asparagine).

This sequence belongs to the peptidase M14 family. Zn(2+) serves as cofactor.

Its subcellular location is the secreted. Its function is as follows. Extracellular metalloprotease that contributes to pathogenicity. The polypeptide is Carboxypeptidase 2 (MCPB) (Trichophyton equinum (Horse ringworm fungus)).